Reading from the N-terminus, the 197-residue chain is Zinc finger protein 581 (197 aa).

The segment covering 1–10 has biased composition (pro residues); sequence MLVLPSPCPQ. A disordered region spans residues 1-52; that stretch reads MLVLPSPCPQPLAFSSVETMEGPPRRTCRSPEPGPSSSIGSPQASSPPRPNH. Residues 35–44 are compositionally biased toward low complexity; sequence PSSSIGSPQA. 4 consecutive C2H2-type zinc fingers follow at residues 87-109, 115-137, 145-167, and 173-196; these read YSCPVCSRVFEYMSYLQRHSITH, FECDICGKAFKRASHLARHHSIH, HGCPLCPRRFRDAGELAQHSRVH, and FQCPHCPRRFMEQNTLQKHTRWKH.

It localises to the nucleus. May be involved in transcriptional regulation. This chain is Zinc finger protein 581 (ZNF581), found in Homo sapiens (Human).